An 87-amino-acid polypeptide reads, in one-letter code: uncharacterized protein (87 aa).

This is an uncharacterized protein from Bacillus subtilis (strain 168).